A 159-amino-acid chain; its full sequence is Ribosomal RNA large subunit methyltransferase H (159 aa).

Residues Leu76, Gly108, and 127 to 132 contribute to the S-adenosyl-L-methionine site; that span reads FSKMTF.

This sequence belongs to the RNA methyltransferase RlmH family. As to quaternary structure, homodimer.

It is found in the cytoplasm. The enzyme catalyses pseudouridine(1915) in 23S rRNA + S-adenosyl-L-methionine = N(3)-methylpseudouridine(1915) in 23S rRNA + S-adenosyl-L-homocysteine + H(+). Specifically methylates the pseudouridine at position 1915 (m3Psi1915) in 23S rRNA. This chain is Ribosomal RNA large subunit methyltransferase H, found in Bifidobacterium animalis subsp. lactis (strain AD011).